A 101-amino-acid polypeptide reads, in one-letter code: Small ribosomal subunit protein uS14 (101 aa).

Belongs to the universal ribosomal protein uS14 family. In terms of assembly, part of the 30S ribosomal subunit. Contacts proteins S3 and S10.

Its function is as follows. Binds 16S rRNA, required for the assembly of 30S particles and may also be responsible for determining the conformation of the 16S rRNA at the A site. The sequence is that of Small ribosomal subunit protein uS14 from Shewanella sp. (strain ANA-3).